We begin with the raw amino-acid sequence, 106 residues long: Synaptic plasticity regulator PANTS (106 aa).

The tract at residues 67–106 (LQQSEKTRLEGKQNNSPVWTLRKNPPPDWYLPLDPGKPRQ) is disordered.

It belongs to the UPF0545 family. Post-translationally, rapidly degraded by proteolysis following neuronal stimulation, resulting in increased AMPA receptor clustering.

Its subcellular location is the synapse. The protein localises to the synaptic cleft. Its function is as follows. Negatively regulates long-term potentiation and modulates adult synaptic plasticity. In Xenopus laevis (African clawed frog), this protein is Synaptic plasticity regulator PANTS.